The primary structure comprises 645 residues: 1,4-alpha-glucan branching enzyme GlgB (645 aa).

Asp309 acts as the Nucleophile in catalysis. The Proton donor role is filled by Glu352. The tract at residues 619-645 (VKTRKGSKKQDGSKTKVRSNVTSRGKR) is disordered. The segment covering 636–645 (RSNVTSRGKR) has biased composition (polar residues).

The protein belongs to the glycosyl hydrolase 13 family. GlgB subfamily. Monomer.

It carries out the reaction Transfers a segment of a (1-&gt;4)-alpha-D-glucan chain to a primary hydroxy group in a similar glucan chain.. The protein operates within glycan biosynthesis; glycogen biosynthesis. Its function is as follows. Catalyzes the formation of the alpha-1,6-glucosidic linkages in glycogen by scission of a 1,4-alpha-linked oligosaccharide from growing alpha-1,4-glucan chains and the subsequent attachment of the oligosaccharide to the alpha-1,6 position. The polypeptide is 1,4-alpha-glucan branching enzyme GlgB (Bacillus anthracis (strain CDC 684 / NRRL 3495)).